A 256-amino-acid polypeptide reads, in one-letter code: Protein FixA (256 aa).

This sequence belongs to the ETF beta-subunit/FixA family. In terms of assembly, heterodimer of FixA and FixB.

It participates in amine and polyamine metabolism; carnitine metabolism. Functionally, required for anaerobic carnitine reduction. May bring reductant to CaiA. The protein is Protein FixA of Salmonella paratyphi A (strain ATCC 9150 / SARB42).